We begin with the raw amino-acid sequence, 408 residues long: Mitochondrial outer membrane protein SLC25A46 (408 aa).

Disordered stretches follow at residues methionine 1 to cysteine 23 and histidine 52 to glycine 80. The segment covering leucine 66 to glycine 76 has biased composition (low complexity). A Solcar 1 repeat occupies glutamine 86–proline 177. A run of 6 helical transmembrane segments spans residues phenylalanine 93 to leucine 113, phenylalanine 157 to proline 177, isoleucine 189 to alanine 209, leucine 248 to isoleucine 268, phenylalanine 304 to leucine 324, and leucine 373 to leucine 393. Residues aspartate 301–leucine 403 form a Solcar 2 repeat.

Belongs to the mitochondrial carrier (TC 2.A.29) family.

It is found in the mitochondrion outer membrane. In terms of biological role, transmembrane protein of the mitochondrial outer membrane that controls mitochondrial organization. May regulate the assembly of the MICOS (mitochondrial contact site and cristae organizing system) complex which is essential to the biogenesis and dynamics of mitochondrial cristae, the inwards folds of the inner mitochondrial membrane. Through its interaction with the EMC (endoplasmic reticulum membrane protein complex), could regulate mitochondrial lipid homeostasis and thereby mitochondrial fission. This is Mitochondrial outer membrane protein SLC25A46 from Gallus gallus (Chicken).